The primary structure comprises 179 residues: Hypoxanthine-guanine phosphoribosyltransferase (179 aa).

Diphosphate contacts are provided by lysine 42 and glycine 43. Mg(2+) contacts are provided by glutamate 98 and aspartate 99. Residue glutamate 102 is the Proton acceptor of the active site. GMP is bound by residues lysine 130, 151-152 (FV), and aspartate 158. Arginine 164 is a binding site for diphosphate.

Belongs to the purine/pyrimidine phosphoribosyltransferase family. Requires Mg(2+) as cofactor.

Its subcellular location is the cytoplasm. The enzyme catalyses IMP + diphosphate = hypoxanthine + 5-phospho-alpha-D-ribose 1-diphosphate. It carries out the reaction GMP + diphosphate = guanine + 5-phospho-alpha-D-ribose 1-diphosphate. It participates in purine metabolism; IMP biosynthesis via salvage pathway; IMP from hypoxanthine: step 1/1. It functions in the pathway purine metabolism; GMP biosynthesis via salvage pathway; GMP from guanine: step 1/1. Its function is as follows. Purine salvage pathway enzyme that catalyzes the transfer of the ribosyl-5-phosphate group from 5-phospho-alpha-D-ribose 1-diphosphate (PRPP) to the N9 position of the 6-oxopurines hypoxanthine and guanine to form the corresponding ribonucleotides IMP (inosine 5'-monophosphate) and GMP (guanosine 5'-monophosphate), with the release of PPi. The protein is Hypoxanthine-guanine phosphoribosyltransferase (hpt) of Staphylococcus aureus (strain COL).